Consider the following 151-residue polypeptide: UPF0208 membrane protein Ent638_2839 (151 aa).

2 helical membrane-spanning segments follow: residues 46–65 (YAIRFMPPIAVFTLCWQIAL) and 69–91 (LGPAVATALFALSLPMQGLWWLG).

It belongs to the UPF0208 family.

The protein resides in the cell inner membrane. The sequence is that of UPF0208 membrane protein Ent638_2839 from Enterobacter sp. (strain 638).